A 194-amino-acid polypeptide reads, in one-letter code: UPF0215 protein Mbar_A0619 (194 aa).

The protein belongs to the UPF0215 family.

This Methanosarcina barkeri (strain Fusaro / DSM 804) protein is UPF0215 protein Mbar_A0619.